The following is a 733-amino-acid chain: MPLAQLVNLWPEVAVVHEDPENGHGSPEEGGRHTSKDEVVVKEFPITHHVKEGSEKADQSDFVLLKVLGQGSFGKVFLVRKITPPDANQLYAMKVLKKATLKVRDRVRTKMERDILADVHHPFVVRLHYAFQTEGKLYLILDFLRGGDLFTRLSKEVMFTEEDVKFYLAELALGLDHLHSLGIIYRDLKPENILLDEEGHIKLTDFGLSKEAIDHEKKAYSFCGTVEYMAPEVVNRQGHSHSADWWSYGVLMFEMLTGSLPFQGKDRKETMTLILKAKLGMPQFLSNEAQSLLRALFKRNPTNRLGSAMEGAEEIKRQPFFSTIDWNKLFRREMSPPFKPAVTQADDTYYFDTEFTSRTPKDSPGIPPSAGAHQLFRGFSFVAPALVEEDAKKTSSPPVLSVPKTHSKNILFMDVYTVRETIGVGSYSVCKRCVHKGTNMEYAVKVIDKTKRDPSEEIEILRRYGQHPNIIALKDVYKEGNSIYVVTELMRGGELLDRILRQKFFSEREASSVLFTVCKTVENLHSQGVVHRDLKPSNILYVDESGDPESIRICDFGFAKQLRADNGLLMTPCYTANFVAPEVLKRQGYDEGCDIWSLGILLYTMLAGYTPFANGLGDTPEEILARIGSGKFTLRGGNWNTVSAAAKDLVSRMLHVDPHKRLTAKQVLQHEWITKRDALPQSQLNRQDVHLVKGAMAATYSALNSSKPTPLLQPIKSSILAQRRVKKLPSTTL.

Residues 18–38 (EDPENGHGSPEEGGRHTSKDE) are disordered. One can recognise a Protein kinase 1 domain in the interval 62–321 (FVLLKVLGQG…AEEIKRQPFF (260 aa)). ATP is bound by residues 68–76 (LGQGSFGKV) and Lys94. The Proton acceptor role is filled by Asp187. At Ser221 the chain carries Phosphoserine. The AGC-kinase C-terminal domain occupies 322–391 (STIDWNKLFR…VAPALVEEDA (70 aa)). Phosphothreonine is present on Thr359. Ser363 is modified (phosphoserine). Ser380 carries the phosphoserine; by autocatalysis modification. The 258-residue stretch at 416–673 (YTVRETIGVG…AKQVLQHEWI (258 aa)) folds into the Protein kinase 2 domain. Residues 422-430 (IGVGSYSVC) and Lys445 each bind ATP. Asp533 functions as the Proton acceptor in the catalytic mechanism. Phosphothreonine is present on Thr571. Residue Ser730 is modified to Phosphoserine.

This sequence belongs to the protein kinase superfamily. AGC Ser/Thr protein kinase family. S6 kinase subfamily. The cofactor is Mg(2+). Autophosphorylated on Ser-380, as part of the activation process.

It catalyses the reaction L-seryl-[protein] + ATP = O-phospho-L-seryl-[protein] + ADP + H(+). The enzyme catalyses L-threonyl-[protein] + ATP = O-phospho-L-threonyl-[protein] + ADP + H(+). With respect to regulation, activated by multiple phosphorylations on threonine and serine residues. Functionally, serine/threonine kinase that may play a role in mediating the growth-factor and stress induced activation of transcription. The polypeptide is Ribosomal protein S6 kinase 2 alpha (rps6ka) (Xenopus laevis (African clawed frog)).